The following is a 268-amino-acid chain: Glutamate racemase (268 aa).

Substrate is bound by residues 10–11 and 42–43; these read DS and YG. Cys73 acts as the Proton donor/acceptor in catalysis. 74–75 is a binding site for substrate; that stretch reads NT. Cys184 functions as the Proton donor/acceptor in the catalytic mechanism. Position 185 to 186 (185 to 186) interacts with substrate; the sequence is TH.

Belongs to the aspartate/glutamate racemases family.

It carries out the reaction L-glutamate = D-glutamate. It functions in the pathway cell wall biogenesis; peptidoglycan biosynthesis. Functionally, provides the (R)-glutamate required for cell wall biosynthesis. The polypeptide is Glutamate racemase (Carnobacterium sp. (strain St2)).